Consider the following 201-residue polypeptide: Anthranilate synthase component 2 (201 aa).

Residues 2–201 form the Glutamine amidotransferase type-1 domain; that stretch reads KVLILDNYDS…KCLLRNFINS (200 aa). 59 to 61 is an L-glutamine binding site; that stretch reads GPG. The Nucleophile; for GATase activity role is filled by C89. Residues Q93 and 139 to 140 each bind L-glutamine; that span reads SL. Active-site for GATase activity residues include H182 and E184.

In terms of assembly, heterotetramer consisting of two non-identical subunits: a beta subunit (TrpG) and a large alpha subunit (TrpE).

It catalyses the reaction chorismate + L-glutamine = anthranilate + pyruvate + L-glutamate + H(+). The protein operates within amino-acid biosynthesis; L-tryptophan biosynthesis; L-tryptophan from chorismate: step 1/5. Functionally, part of a heterotetrameric complex that catalyzes the two-step biosynthesis of anthranilate, an intermediate in the biosynthesis of L-tryptophan. In the first step, the glutamine-binding beta subunit (TrpG) of anthranilate synthase (AS) provides the glutamine amidotransferase activity which generates ammonia as a substrate that, along with chorismate, is used in the second step, catalyzed by the large alpha subunit of AS (TrpE) to produce anthranilate. In the absence of TrpG, TrpE can synthesize anthranilate directly from chorismate and high concentrations of ammonia. The protein is Anthranilate synthase component 2 (trpG) of Leptospira biflexa.